Reading from the N-terminus, the 73-residue chain is Translation initiation factor IF-1 1 (73 aa).

Residues 1-72 (MAKEELIEFG…TKGRINFRHK (72 aa)) form the S1-like domain.

The protein belongs to the IF-1 family. As to quaternary structure, component of the 30S ribosomal translation pre-initiation complex which assembles on the 30S ribosome in the order IF-2 and IF-3, IF-1 and N-formylmethionyl-tRNA(fMet); mRNA recruitment can occur at any time during PIC assembly.

It localises to the cytoplasm. One of the essential components for the initiation of protein synthesis. Stabilizes the binding of IF-2 and IF-3 on the 30S subunit to which N-formylmethionyl-tRNA(fMet) subsequently binds. Helps modulate mRNA selection, yielding the 30S pre-initiation complex (PIC). Upon addition of the 50S ribosomal subunit IF-1, IF-2 and IF-3 are released leaving the mature 70S translation initiation complex. The sequence is that of Translation initiation factor IF-1 1 from Cupriavidus pinatubonensis (strain JMP 134 / LMG 1197) (Cupriavidus necator (strain JMP 134)).